The sequence spans 225 residues: NAD(P)H-hydrate epimerase (225 aa).

The YjeF N-terminal domain maps to 9 to 209 (MQTIDNYTVE…DIGLLTPQDF (201 aa)). Residue 57 to 61 (NNGAD) coordinates (6S)-NADPHX. K(+)-binding residues include Asn58 and Asp119. Residues 123 to 129 (GTGLNNL) and Asp152 each bind (6S)-NADPHX. Residue Thr155 coordinates K(+).

Belongs to the NnrE/AIBP family. K(+) serves as cofactor.

It catalyses the reaction (6R)-NADHX = (6S)-NADHX. The enzyme catalyses (6R)-NADPHX = (6S)-NADPHX. Catalyzes the epimerization of the S- and R-forms of NAD(P)HX, a damaged form of NAD(P)H that is a result of enzymatic or heat-dependent hydration. This is a prerequisite for the S-specific NAD(P)H-hydrate dehydratase to allow the repair of both epimers of NAD(P)HX. The chain is NAD(P)H-hydrate epimerase from Leuconostoc sp. (strain C2).